The following is a 562-amino-acid chain: Potassium-transporting ATPase potassium-binding subunit (562 aa).

The next 12 membrane-spanning stretches (helical) occupy residues 5-25 (GILA…PLGG), 65-85 (AYLR…YAVF), 135-155 (IGIT…AMAF), 181-201 (LLLP…VPET), 257-277 (ILEI…AGHF), 283-303 (LAIV…YIVY), 331-351 (FGLP…TGAV), 358-378 (LMPL…IFGG), 381-401 (VGLL…GLMV), 422-442 (AAML…MALP), 486-506 (ISIG…MLAI), and 528-548 (FAFG…TFFP).

The protein belongs to the KdpA family. As to quaternary structure, the system is composed of three essential subunits: KdpA, KdpB and KdpC.

The protein resides in the cell membrane. Functionally, part of the high-affinity ATP-driven potassium transport (or Kdp) system, which catalyzes the hydrolysis of ATP coupled with the electrogenic transport of potassium into the cytoplasm. This subunit binds the extracellular potassium ions and delivers the ions to the membrane domain of KdpB through an intramembrane tunnel. The protein is Potassium-transporting ATPase potassium-binding subunit of Alicyclobacillus acidocaldarius subsp. acidocaldarius (strain ATCC 27009 / DSM 446 / BCRC 14685 / JCM 5260 / KCTC 1825 / NBRC 15652 / NCIMB 11725 / NRRL B-14509 / 104-IA) (Bacillus acidocaldarius).